Consider the following 178-residue polypeptide: ATP synthase subunit b, chloroplastic (178 aa).

Residues 26–46 (TNLINIIILLIILFYFLKGLL) traverse the membrane as a helical segment.

It belongs to the ATPase B chain family. As to quaternary structure, F-type ATPases have 2 components, F(1) - the catalytic core - and F(0) - the membrane proton channel. F(1) has five subunits: alpha(3), beta(3), gamma(1), delta(1), epsilon(1). F(0) has four main subunits: a(1), b(1), b'(1) and c(10-14). The alpha and beta chains form an alternating ring which encloses part of the gamma chain. F(1) is attached to F(0) by a central stalk formed by the gamma and epsilon chains, while a peripheral stalk is formed by the delta, b and b' chains.

The protein localises to the plastid. It is found in the chloroplast thylakoid membrane. Functionally, f(1)F(0) ATP synthase produces ATP from ADP in the presence of a proton or sodium gradient. F-type ATPases consist of two structural domains, F(1) containing the extramembraneous catalytic core and F(0) containing the membrane proton channel, linked together by a central stalk and a peripheral stalk. During catalysis, ATP synthesis in the catalytic domain of F(1) is coupled via a rotary mechanism of the central stalk subunits to proton translocation. In terms of biological role, component of the F(0) channel, it forms part of the peripheral stalk, linking F(1) to F(0). This is ATP synthase subunit b, chloroplastic from Vaucheria litorea (Yellow-green alga).